Here is a 161-residue protein sequence, read N- to C-terminus: uncharacterized protein (161 aa).

Disordered regions lie at residues 47–83 and 104–137; these read KPAKRNIHGHNNHTRSSNHPHSGAHSNINHNNNNNIN and RRLQQNGGGGDSSSSRSSNNNNSTNDNKPQSKNY. Residues 50-64 show a composition bias toward basic residues; the sequence is KRNIHGHNNHTRSSN. 2 stretches are compositionally biased toward low complexity: residues 73-83 and 115-130; these read NINHNNNNNIN and SSSSRSSNNNNSTNDN.

This is an uncharacterized protein from Dictyostelium discoideum (Social amoeba).